Here is a 71-residue protein sequence, read N- to C-terminus: METIYDEIEIEDFTFDPVTQLFQYPCPCGDRFAVSIDDLNDGEDIAVCPSCSLMVKVIFEPEDLQEYYDEI.

In terms of domain architecture, DPH-type MB spans 4 to 60 (IYDEIEIEDFTFDPVTQLFQYPCPCGDRFAVSIDDLNDGEDIAVCPSCSLMVKVIFE). Fe cation-binding residues include C26, C28, C48, and C51.

This sequence belongs to the DPH3 family. In terms of assembly, component of the 2-(3-amino-3-carboxypropyl)histidine synthase complex composed of DPH1, DPH2, DPH3 and a NADH-dependent reductase, predominantly CBR1. It depends on Fe(2+) as a cofactor.

The protein resides in the cytoplasm. It localises to the nucleus. It carries out the reaction [3Fe-4S](1+)-[protein] + Fe(2+)-[Dph3] = [3Fe-4S](0)-[protein] + Fe(3+)-[Dph3]. The catalysed reaction is 2 [3Fe-4S](0)-[protein] + 2 Fe(2+)-[Dph3] + NADH = 2 [4Fe-4S](1+)-[protein] + 2 [Dph3] + NAD(+) + H(+). Its pathway is protein modification; peptidyl-diphthamide biosynthesis. Functionally, required for the first step of diphthamide biosynthesis, a post-translational modification of histidine which occurs in elongation factor 2. DPH1 and DPH2 transfer a 3-amino-3-carboxypropyl (ACP) group from S-adenosyl-L-methionine (SAM) to a histidine residue, the reaction is assisted by a reduction system comprising KTI11/DPH3 and a NADH-dependent reductase, predominantly CBR1. Acts as an electron donor to reduce the Fe-S cluster in DPH1-DPH2 keeping the [4Fe-4S] clusters in the active and reduced state. Restores iron to DPH1-DPH2 iron-sulfur clusters which have degraded from [4Fe-4S] to [3Fe-4S] by donating an iron atom to reform [4Fe-4S] clusters, in a manner dependent on the presence of elongation factor 2 and SAM. Associates with the elongator complex and is required for tRNA Wobble base modifications mediated by the elongator complex. The elongator complex is required for multiple tRNA modifications, including mcm5U (5-methoxycarbonylmethyl uridine), mcm5s 2U (5-methoxycarbonylmethyl-2-thiouridine), and ncm5U (5-carbamoylmethyl uridine). This is Diphthamide biosynthesis protein 3 (DPH3) from Debaryomyces hansenii (strain ATCC 36239 / CBS 767 / BCRC 21394 / JCM 1990 / NBRC 0083 / IGC 2968) (Yeast).